Here is a 252-residue protein sequence, read N- to C-terminus: MILHAQAKHGKPGLPWLVFLHGFSGDCHEWQEVGEAFADYSRLYVDLPGHGGSATISVDGFDDVTDLLCKTLVSYNILNFWLVGYSLGGRVAMMAACQELAGLCGVVVEGGHPGLQNAEQRAERQRSDRQWAQRFRTEPLTAVFADWYQQPVFTSLNDDQRRELVALRSNNNGTTLAAMLEATSLAVQPDLRANLSARTFAFYYLCGERDSKFRALAAELAAECHVIPRAGHNAHRENPAGVIASLAQILRF.

Belongs to the AB hydrolase superfamily. MenH family. Monomer.

It catalyses the reaction 5-enolpyruvoyl-6-hydroxy-2-succinyl-cyclohex-3-ene-1-carboxylate = (1R,6R)-6-hydroxy-2-succinyl-cyclohexa-2,4-diene-1-carboxylate + pyruvate. Its pathway is quinol/quinone metabolism; 1,4-dihydroxy-2-naphthoate biosynthesis; 1,4-dihydroxy-2-naphthoate from chorismate: step 3/7. The protein operates within quinol/quinone metabolism; menaquinone biosynthesis. Its function is as follows. Catalyzes a proton abstraction reaction that results in 2,5-elimination of pyruvate from 2-succinyl-5-enolpyruvyl-6-hydroxy-3-cyclohexene-1-carboxylate (SEPHCHC) and the formation of 2-succinyl-6-hydroxy-2,4-cyclohexadiene-1-carboxylate (SHCHC). The polypeptide is 2-succinyl-6-hydroxy-2,4-cyclohexadiene-1-carboxylate synthase (Escherichia coli O17:K52:H18 (strain UMN026 / ExPEC)).